The following is a 386-amino-acid chain: Leupaxin (386 aa).

Methionine 1 bears the N-acetylmethionine mark. An LD motif 1 motif is present at residues 3–15; it reads ELDALLEELERST. The segment at 12–51 is disordered; it reads ERSTLQDSDEYSNSAPLPLDQSSRKESNLDETSKMLSVQD. Residues 16–26 are compositionally biased toward polar residues; it reads LQDSDEYSNSA. The residue at position 19 (serine 19) is a Phosphoserine. Position 22 is a phosphotyrosine (tyrosine 22). Over residues 33-44 the composition is skewed to basic and acidic residues; the sequence is SSRKESNLDETS. Tyrosine 62 carries the phosphotyrosine modification. Short sequence motifs (LD motif) lie at residues 70–82 and 92–103; these read NVYSEVQEPKKSP and QLDELMAHLSEM. Tyrosine 72 carries the post-translational modification Phosphotyrosine; by LYN. Serine 81 is subject to Phosphoserine. LIM zinc-binding domains are found at residues 150–209, 210–267, 268–327, and 328–386; these read GHCA…LFSP, RCAY…AMFS, PKCG…RRGT, and LCHG…LFSL.

This sequence belongs to the paxillin family. In terms of assembly, interacts with unphosphorylated ITGA4. Interacts with AR and SRF. Interacts with PTK2B/PYK2, PTPN22 and PTPN12. Interacts (via LD motif 3) with LYN and the interaction is induced upon B-cell antigen receptor (BCR) activation. Interacts (via LD motif 3) with PTK2/FAK. Phosphorylated on tyrosine residues. Phosphorylation on Tyr-72 is important for its inhibitory function. Bombesin stimulates phosphorylation on Tyr-22, Tyr-62 and Tyr-72.

Its subcellular location is the cytoplasm. The protein localises to the cell junction. It is found in the focal adhesion. The protein resides in the nucleus. It localises to the perinuclear region. Its subcellular location is the cell projection. The protein localises to the podosome. It is found in the cell membrane. In terms of biological role, transcriptional coactivator for androgen receptor (AR) and serum response factor (SRF). Contributes to the regulation of cell adhesion, spreading and cell migration and acts as a negative regulator in integrin-mediated cell adhesion events. Suppresses the integrin-induced tyrosine phosphorylation of paxillin (PXN). May play a critical role as an adapter protein in the formation of the adhesion zone in osteoclasts. Negatively regulates B-cell antigen receptor (BCR) signaling. This is Leupaxin (LPXN) from Oryctolagus cuniculus (Rabbit).